The chain runs to 156 residues: Ribosome maturation factor RimP (156 aa).

The protein belongs to the RimP family.

The protein localises to the cytoplasm. Its function is as follows. Required for maturation of 30S ribosomal subunits. In Synechococcus sp. (strain JA-2-3B'a(2-13)) (Cyanobacteria bacterium Yellowstone B-Prime), this protein is Ribosome maturation factor RimP.